The chain runs to 360 residues: UPF0283 membrane protein Oant_2119 (360 aa).

Residues 1–30 (MTEKTPRKPASFTVSQASNRPEAADEAPRR) form a disordered region. Helical transmembrane passes span 77–97 (ILFG…TEDL) and 108–128 (LGWT…AIVV).

The protein belongs to the UPF0283 family.

It is found in the cell inner membrane. The chain is UPF0283 membrane protein Oant_2119 from Brucella anthropi (strain ATCC 49188 / DSM 6882 / CCUG 24695 / JCM 21032 / LMG 3331 / NBRC 15819 / NCTC 12168 / Alc 37) (Ochrobactrum anthropi).